We begin with the raw amino-acid sequence, 556 residues long: MNHSEALTEQVFSFASELYAYGVREVVISPGSRSTPLALAFEAHPNIKTWIHPDERSAAFFALGLIKGSEKPVAILCTSGTAAANYTPAIAESQISRLPLVVLTSDRPHELRSVGAPQAINQVNMFSNYVNFQFDLPIADGSEHTIDTINYQMQIASQYLYGPHRGPIHFNLPFREPLTPDLDRVDLLTSVTKTLPHYQKSISVDDIKDILQEKNGLIIVGDMQHQAVDQILTYSTIYDLPILADPLSQLRKEKHPNVITTYDLLYRAGLNLEVDYVIRVGKPVISKKLNQWLKKTDAYQIIVQNNDQIDVFPTPPHISYEISANDFFRSLMEEPLVERKKWLQQWQSLEQQARIEISDYLKHATDEAAYVGSLIQKLTKEDTLFVGNSMPIRDVDNLLFDSEASVYANRGANGIDGVVSTALGMAAHKNVILLIGDLSFYHDMNGLLMAKLNELHINIVLVNNNGGGIFSYLPQKRSATKYFERLFGTPTGLNFEYTALLYDFTFKRFDNLTDFKYAELSKMGSHMYEVITNRDENLHQHQNLYQKLSEIVNVTL.

The protein belongs to the TPP enzyme family. MenD subfamily. As to quaternary structure, homodimer. Mg(2+) serves as cofactor. Mn(2+) is required as a cofactor. Requires thiamine diphosphate as cofactor.

The enzyme catalyses isochorismate + 2-oxoglutarate + H(+) = 5-enolpyruvoyl-6-hydroxy-2-succinyl-cyclohex-3-ene-1-carboxylate + CO2. The protein operates within quinol/quinone metabolism; 1,4-dihydroxy-2-naphthoate biosynthesis; 1,4-dihydroxy-2-naphthoate from chorismate: step 2/7. Its pathway is quinol/quinone metabolism; menaquinone biosynthesis. Catalyzes the thiamine diphosphate-dependent decarboxylation of 2-oxoglutarate and the subsequent addition of the resulting succinic semialdehyde-thiamine pyrophosphate anion to isochorismate to yield 2-succinyl-5-enolpyruvyl-6-hydroxy-3-cyclohexene-1-carboxylate (SEPHCHC). The polypeptide is 2-succinyl-5-enolpyruvyl-6-hydroxy-3-cyclohexene-1-carboxylate synthase (Staphylococcus epidermidis (strain ATCC 12228 / FDA PCI 1200)).